We begin with the raw amino-acid sequence, 121 residues long: UPF0102 protein BF0706 (121 aa).

The protein belongs to the UPF0102 family.

The chain is UPF0102 protein BF0706 from Bacteroides fragilis (strain YCH46).